We begin with the raw amino-acid sequence, 195 residues long: Glycerol-3-phosphate acyltransferase (195 aa).

5 helical membrane-spanning segments follow: residues 2-22 (LWIF…GLFI), 52-72 (YGVA…LMAY), 78-98 (WIFI…SIFM), 112-132 (VFLA…LAVI), and 145-165 (FAVA…VPLA).

Belongs to the PlsY family. Probably interacts with PlsX.

The protein localises to the cell inner membrane. It catalyses the reaction an acyl phosphate + sn-glycerol 3-phosphate = a 1-acyl-sn-glycero-3-phosphate + phosphate. The protein operates within lipid metabolism; phospholipid metabolism. Catalyzes the transfer of an acyl group from acyl-phosphate (acyl-PO(4)) to glycerol-3-phosphate (G3P) to form lysophosphatidic acid (LPA). This enzyme utilizes acyl-phosphate as fatty acyl donor, but not acyl-CoA or acyl-ACP. This is Glycerol-3-phosphate acyltransferase from Maridesulfovibrio salexigens (strain ATCC 14822 / DSM 2638 / NCIMB 8403 / VKM B-1763) (Desulfovibrio salexigens).